The chain runs to 156 residues: Proline dehydrogenase transcriptional activator (156 aa).

The region spanning 10–71 is the HTH asnC-type domain; the sequence is LDHFDLKILE…VLNPQKLGVD (62 aa). The segment at residues 29 to 48 is a DNA-binding region (H-T-H motif); that stretch reads VLQLSKRVGLSKTPCQTRLK.

Functionally, transcriptional activator of the putA gene in response to proline. The polypeptide is Proline dehydrogenase transcriptional activator (putR) (Rhizobium radiobacter (Agrobacterium tumefaciens)).